We begin with the raw amino-acid sequence, 477 residues long: 3-isopropylmalate dehydratase large subunit (477 aa).

The [4Fe-4S] cluster site is built by Cys-352, Cys-413, and Cys-416.

The protein belongs to the aconitase/IPM isomerase family. LeuC type 1 subfamily. In terms of assembly, heterodimer of LeuC and LeuD. It depends on [4Fe-4S] cluster as a cofactor.

The enzyme catalyses (2R,3S)-3-isopropylmalate = (2S)-2-isopropylmalate. Its pathway is amino-acid biosynthesis; L-leucine biosynthesis; L-leucine from 3-methyl-2-oxobutanoate: step 2/4. In terms of biological role, catalyzes the isomerization between 2-isopropylmalate and 3-isopropylmalate, via the formation of 2-isopropylmaleate. This Pseudomonas entomophila (strain L48) protein is 3-isopropylmalate dehydratase large subunit.